Here is a 685-residue protein sequence, read N- to C-terminus: DNA-directed RNA polymerase subunit beta' (685 aa).

Residues C69, C71, C87, and C90 each contribute to the Zn(2+) site. Residues D492, D494, and D496 each contribute to the Mg(2+) site.

It belongs to the RNA polymerase beta' chain family. RpoC1 subfamily. As to quaternary structure, in plastids the minimal PEP RNA polymerase catalytic core is composed of four subunits: alpha, beta, beta', and beta''. When a (nuclear-encoded) sigma factor is associated with the core the holoenzyme is formed, which can initiate transcription. Requires Mg(2+) as cofactor. Zn(2+) is required as a cofactor.

The protein localises to the plastid. The protein resides in the chloroplast. The catalysed reaction is RNA(n) + a ribonucleoside 5'-triphosphate = RNA(n+1) + diphosphate. In terms of biological role, DNA-dependent RNA polymerase catalyzes the transcription of DNA into RNA using the four ribonucleoside triphosphates as substrates. The polypeptide is DNA-directed RNA polymerase subunit beta' (Dioscorea elephantipes (Elephant's foot yam)).